The primary structure comprises 562 residues: 3-(3-hydroxy-phenyl)propionate/3-hydroxycinnamic acid hydroxylase (562 aa).

FAD contacts are provided by residues 8–37 and 275–285; these read DVVIVGAGPVGLTLANILGGQGVRTLIIEE and FRKGRMLLAGD.

This sequence belongs to the PheA/TfdB FAD monooxygenase family. The cofactor is FAD.

It carries out the reaction 3-(3-hydroxyphenyl)propanoate + NADH + O2 + H(+) = 3-(2,3-dihydroxyphenyl)propanoate + NAD(+) + H2O. The catalysed reaction is (2E)-3-(3-hydroxyphenyl)prop-2-enoate + NADH + O2 + H(+) = (2E)-3-(2,3-dihydroxyphenyl)prop-2-enoate + NAD(+) + H2O. It functions in the pathway aromatic compound metabolism; 3-phenylpropanoate degradation. Functionally, catalyzes the insertion of one atom of molecular oxygen into position 2 of the phenyl ring of 3-(3-hydroxyphenyl)propionate (3-HPP) and hydroxycinnamic acid (3HCI). This Mycolicibacterium smegmatis (strain ATCC 700084 / mc(2)155) (Mycobacterium smegmatis) protein is 3-(3-hydroxy-phenyl)propionate/3-hydroxycinnamic acid hydroxylase.